Reading from the N-terminus, the 190-residue chain is Shikimate kinase (190 aa).

13-18 provides a ligand contact to ATP; sequence GSGKTT. Thr17 serves as a coordination point for Mg(2+). Positions 35, 59, and 81 each coordinate substrate. Arg119 serves as a coordination point for ATP. A substrate-binding site is contributed by Arg138. Gln155 serves as a coordination point for ATP.

The protein belongs to the shikimate kinase family. As to quaternary structure, monomer. It depends on Mg(2+) as a cofactor.

Its subcellular location is the cytoplasm. It catalyses the reaction shikimate + ATP = 3-phosphoshikimate + ADP + H(+). It participates in metabolic intermediate biosynthesis; chorismate biosynthesis; chorismate from D-erythrose 4-phosphate and phosphoenolpyruvate: step 5/7. Catalyzes the specific phosphorylation of the 3-hydroxyl group of shikimic acid using ATP as a cosubstrate. This Nitrosococcus oceani (strain ATCC 19707 / BCRC 17464 / JCM 30415 / NCIMB 11848 / C-107) protein is Shikimate kinase.